A 145-amino-acid chain; its full sequence is UPF0201 protein STK_09490 (145 aa).

This sequence belongs to the UPF0201 family.

This chain is UPF0201 protein STK_09490, found in Sulfurisphaera tokodaii (strain DSM 16993 / JCM 10545 / NBRC 100140 / 7) (Sulfolobus tokodaii).